We begin with the raw amino-acid sequence, 179 residues long: MKQFLDFLPLVVFFAFYKIYDIYAATTALIVATAIVLIYSWVRFRKVEKMALITFVLVVVFGGLTLFFHNDEFIKWKVTVIYALFAGALLVSQWVMKKPLIQRMLGKELTLPQPVWSKLNLAWAVFFILCGLANIYIAFWLPQNIWVNFKVFGLTALTLIFTLLSGIYIYRHMPQEDKS.

A run of 5 helical transmembrane segments spans residues 22-42, 50-70, 76-96, 121-141, and 149-169; these read IYAA…YSWV, MALI…FFHN, WKVT…QWVM, LAWA…AFWL, and FKVF…GIYI.

It belongs to the YciB family.

The protein resides in the cell inner membrane. In terms of biological role, plays a role in cell envelope biogenesis, maintenance of cell envelope integrity and membrane homeostasis. This Shigella dysenteriae serotype 1 (strain Sd197) protein is Inner membrane-spanning protein YciB.